Consider the following 345-residue polypeptide: MKVAIIGATGYGGIELIRLLEQHPYFSIASLHSFSQVGECITNVYPHFQNVLVHTLQEIDVEEIEKEAEIVFLATPAGVSAELTPKLLAVGLKVIDLSGDFRMKDPFIYEQWYKRAAAKEGVLREAVYGLSEWKRSEIQKANLIANPGCFATAALLAILPLVRSGIIEEDSIIIDAKSGVSGAGKTPTTMTHFPELYDNLRIYKVNEHQHIPEIEQMLAEWNRETKPITFSTHLIPISRGIMVTLYAKVKREMEIEQLQQLYEEAYEQSAFIRIRMQGEFPSPKEVRGSNYCDMGIAYDERTGRVTVVSVIDNMMKGAAGQAIQNANIVAGLEETIGLQHMPLYL.

Cysteine 149 is a catalytic residue.

This sequence belongs to the NAGSA dehydrogenase family. Type 1 subfamily.

Its subcellular location is the cytoplasm. The catalysed reaction is N-acetyl-L-glutamate 5-semialdehyde + phosphate + NADP(+) = N-acetyl-L-glutamyl 5-phosphate + NADPH + H(+). It functions in the pathway amino-acid biosynthesis; L-arginine biosynthesis; N(2)-acetyl-L-ornithine from L-glutamate: step 3/4. In terms of biological role, catalyzes the NADPH-dependent reduction of N-acetyl-5-glutamyl phosphate to yield N-acetyl-L-glutamate 5-semialdehyde. The protein is N-acetyl-gamma-glutamyl-phosphate reductase of Bacillus cereus (strain 03BB102).